We begin with the raw amino-acid sequence, 485 residues long: NADH-quinone oxidoreductase subunit N (485 aa).

14 helical membrane passes run 8-28 (LIAL…MLSI), 35-55 (FLNA…LWFV), 71-91 (GFAM…CTFA), 105-125 (FYLL…ANHL), 127-147 (SLFL…GYAF), 159-179 (YTIL…LVYA), 203-223 (LLAG…LVPF), 235-255 (PAPV…GVVM), 271-291 (VVLA…ALSQ), 297-317 (LLGY…IALQ), 326-346 (VGVY…VVSL), 373-393 (AAVM…LGFI), 408-430 (WWLV…RVAV), and 450-470 (YSAG…LGVW).

It belongs to the complex I subunit 2 family. NDH-1 is composed of 13 different subunits. Subunits NuoA, H, J, K, L, M, N constitute the membrane sector of the complex.

It localises to the cell inner membrane. It carries out the reaction a quinone + NADH + 5 H(+)(in) = a quinol + NAD(+) + 4 H(+)(out). NDH-1 shuttles electrons from NADH, via FMN and iron-sulfur (Fe-S) centers, to quinones in the respiratory chain. The immediate electron acceptor for the enzyme in this species is believed to be ubiquinone. Couples the redox reaction to proton translocation (for every two electrons transferred, four hydrogen ions are translocated across the cytoplasmic membrane), and thus conserves the redox energy in a proton gradient. The protein is NADH-quinone oxidoreductase subunit N of Shigella boydii serotype 4 (strain Sb227).